The chain runs to 446 residues: 3-phosphoshikimate 1-carboxyvinyltransferase (446 aa).

Lys-21, Ser-22, and Arg-26 together coordinate 3-phosphoshikimate. Lys-21 provides a ligand contact to phosphoenolpyruvate. Residues Gly-92 and Arg-120 each coordinate phosphoenolpyruvate. Ser-165, Gln-166, Asp-308, and Lys-335 together coordinate 3-phosphoshikimate. Phosphoenolpyruvate is bound at residue Gln-166. The active-site Proton acceptor is the Asp-308. Residues Arg-339, Arg-380, and Lys-406 each coordinate phosphoenolpyruvate.

It belongs to the EPSP synthase family. Monomer.

It localises to the cytoplasm. The catalysed reaction is 3-phosphoshikimate + phosphoenolpyruvate = 5-O-(1-carboxyvinyl)-3-phosphoshikimate + phosphate. Its pathway is metabolic intermediate biosynthesis; chorismate biosynthesis; chorismate from D-erythrose 4-phosphate and phosphoenolpyruvate: step 6/7. In terms of biological role, catalyzes the transfer of the enolpyruvyl moiety of phosphoenolpyruvate (PEP) to the 5-hydroxyl of shikimate-3-phosphate (S3P) to produce enolpyruvyl shikimate-3-phosphate and inorganic phosphate. The polypeptide is 3-phosphoshikimate 1-carboxyvinyltransferase (Chlamydia caviae (strain ATCC VR-813 / DSM 19441 / 03DC25 / GPIC) (Chlamydophila caviae)).